An 871-amino-acid chain; its full sequence is Pentatricopeptide repeat-containing protein At3g06920 (871 aa).

21 PPR repeats span residues 97–131 (CPES…GFGP), 132–166 (SVNT…KFRP), 167–201 (AFSA…GYEP), 202–236 (TVHL…SLDA), 237–271 (DIVL…GLKP), 272–306 (DEVT…RRVP), 307–341 (CTYA…GSIP), 342–372 (SVIA…MKKD), 376–410 (NLST…GLFP), 411–445 (NVRT…VCTP), 446–480 (DEIT…DCRT), 481–515 (NSIV…NCSP), 516–550 (DLQL…RFVP), 551–585 (DARS…GCVL), 586–620 (DTRA…GFEP), 621–655 (TVVT…RIEL), 656–690 (NVVI…GLTP), 691–725 (NLYT…KCTP), 726–760 (NQVT…GMKP), 761–795 (STIS…GGVP), and 796–830 (DSAC…GLPI).

The protein belongs to the PPR family. P subfamily.

This Arabidopsis thaliana (Mouse-ear cress) protein is Pentatricopeptide repeat-containing protein At3g06920.